A 488-amino-acid chain; its full sequence is UDP-N-acetylmuramate--L-alanine ligase (488 aa).

127–133 contacts ATP; that stretch reads GTHGKTT.

Belongs to the MurCDEF family.

Its subcellular location is the cytoplasm. It catalyses the reaction UDP-N-acetyl-alpha-D-muramate + L-alanine + ATP = UDP-N-acetyl-alpha-D-muramoyl-L-alanine + ADP + phosphate + H(+). Its pathway is cell wall biogenesis; peptidoglycan biosynthesis. Cell wall formation. The protein is UDP-N-acetylmuramate--L-alanine ligase of Shewanella sp. (strain MR-4).